A 161-amino-acid chain; its full sequence is MAGILRSIVQRPPGRLQTATKGVEPLVCVDWIRHKFTRSRIPDEVFRPSPEDHEKYGGDPQQPHKLHIVTRIKSTKRRPYWEKDIIKMLGLQKAHTPQVHKNIPSVNAKLKIVKHLIRIKPLKLPQGLPTEEDMSNTCLKSTGELVTRWLLNPADQEAKKC.

A mitochondrion-targeting transit peptide spans 1 to 34 (MAGILRSIVQRPPGRLQTATKGVEPLVCVDWIRH).

Belongs to the universal ribosomal protein uL30 family. Component of the mitochondrial ribosome large subunit (39S) which comprises a 16S rRNA and about 50 distinct proteins.

Its subcellular location is the mitochondrion. The polypeptide is Large ribosomal subunit protein uL30m (MRPL30) (Bos taurus (Bovine)).